The chain runs to 385 residues: Mannitol-1-phosphate 5-dehydrogenase (385 aa).

3 to 14 (ALQFGAGNIGRG) provides a ligand contact to NAD(+).

The protein belongs to the mannitol dehydrogenase family.

The catalysed reaction is D-mannitol 1-phosphate + NAD(+) = beta-D-fructose 6-phosphate + NADH + H(+). This is Mannitol-1-phosphate 5-dehydrogenase from Buchnera aphidicola subsp. Acyrthosiphon pisum (strain Tuc7).